We begin with the raw amino-acid sequence, 537 residues long: ATP synthase subunit beta 1 (537 aa).

An ATP-binding site is contributed by 164 to 171 (GGAGVGKT). Positions 471–537 (PKQSATEKNS…ESLEEPQNGR (67 aa)) are disordered. Polar residues-rich tracts occupy residues 473–498 (QSAT…SPGP) and 507–528 (IPSS…AQNE).

Belongs to the ATPase alpha/beta chains family. As to quaternary structure, F-type ATPases have 2 components, CF(1) - the catalytic core - and CF(0) - the membrane proton channel. CF(1) has five subunits: alpha(3), beta(3), gamma(1), delta(1), epsilon(1). CF(0) has three main subunits: a(1), b(2) and c(9-12). The alpha and beta chains form an alternating ring which encloses part of the gamma chain. CF(1) is attached to CF(0) by a central stalk formed by the gamma and epsilon chains, while a peripheral stalk is formed by the delta and b chains.

It is found in the cell inner membrane. The enzyme catalyses ATP + H2O + 4 H(+)(in) = ADP + phosphate + 5 H(+)(out). In terms of biological role, produces ATP from ADP in the presence of a proton gradient across the membrane. The catalytic sites are hosted primarily by the beta subunits. This is ATP synthase subunit beta 1 from Pseudoalteromonas atlantica (strain T6c / ATCC BAA-1087).